The following is a 91-amino-acid chain: Probable Fe(2+)-trafficking protein (91 aa).

The protein belongs to the Fe(2+)-trafficking protein family.

In terms of biological role, could be a mediator in iron transactions between iron acquisition and iron-requiring processes, such as synthesis and/or repair of Fe-S clusters in biosynthetic enzymes. This is Probable Fe(2+)-trafficking protein from Tolumonas auensis (strain DSM 9187 / NBRC 110442 / TA 4).